A 452-amino-acid chain; its full sequence is Tubulin alpha-1D chain (452 aa).

Positions 1–4 (MREC) match the MREC motif motif. Glutamine 11 lines the GTP pocket. The residue at position 40 (lysine 40) is an N6-acetyllysine. GTP is bound by residues glutamate 71, serine 140, glycine 144, threonine 145, threonine 179, asparagine 206, and asparagine 228. Glutamate 71 contributes to the Mg(2+) binding site. Residue glutamate 254 is part of the active site. Tyrosine 282 is subject to 3'-nitrotyrosine. The tract at residues 432-452 (YEEVGMDSVEGEGEEEEGDEY) is disordered. At serine 439 the chain carries Phosphoserine. Glutamate 446 is subject to 5-glutamyl polyglutamate. Position 452 is a 3'-nitrotyrosine (tyrosine 452).

The protein belongs to the tubulin family. As to quaternary structure, dimer of alpha and beta chains. A typical microtubule is a hollow water-filled tube with an outer diameter of 25 nm and an inner diameter of 15 nM. Alpha-beta heterodimers associate head-to-tail to form protofilaments running lengthwise along the microtubule wall with the beta-tubulin subunit facing the microtubule plus end conferring a structural polarity. Microtubules usually have 13 protofilaments but different protofilament numbers can be found in some organisms and specialized cells. Mg(2+) is required as a cofactor. Some glutamate residues at the C-terminus are polyglycylated, resulting in polyglycine chains on the gamma-carboxyl group. Glycylation is mainly limited to tubulin incorporated into axonemes (cilia and flagella) whereas glutamylation is prevalent in neuronal cells, centrioles, axonemes, and the mitotic spindle. Both modifications can coexist on the same protein on adjacent residues, and lowering polyglycylation levels increases polyglutamylation, and reciprocally. Cilia and flagella glycylation is required for their stability and maintenance. Flagella glycylation controls sperm motility. Post-translationally, some glutamate residues at the C-terminus are polyglutamylated, resulting in polyglutamate chains on the gamma-carboxyl group. Polyglutamylation plays a key role in microtubule severing by spastin (SPAST). SPAST preferentially recognizes and acts on microtubules decorated with short polyglutamate tails: severing activity by SPAST increases as the number of glutamates per tubulin rises from one to eight, but decreases beyond this glutamylation threshold. Glutamylation is also involved in cilia motility. In terms of processing, acetylation of alpha chains at Lys-40 is located inside the microtubule lumen. This modification has been correlated with increased microtubule stability, intracellular transport and ciliary assembly. Methylation of alpha chains at Lys-40 is found in mitotic microtubules and is required for normal mitosis and cytokinesis contributing to genomic stability. Post-translationally, nitration of Tyr-452 is irreversible and interferes with normal dynein intracellular distribution. In terms of processing, undergoes a tyrosination/detyrosination cycle, the cyclic removal and re-addition of a C-terminal tyrosine residue by the enzymes tubulin tyrosine carboxypeptidase (MATCAP, VASH1 or VASH2) and tubulin tyrosine ligase (TTL), respectively. Tyrosination promotes microtubule interaction with CAP-Gly domain-containing proteins such as CLIP1, CLIP2 and DCTN1. Tyrosination regulates the initiation of dynein-dynactin motility via interaction with DCTN1, which brings the dynein-dynactin complex into contact with microtubules. In neurons, tyrosinated tubulins mediate the initiation of retrograde vesicle transport. Post-translationally, detyrosination is involved in metaphase plate congression by guiding chromosomes during mitosis: detyrosination promotes interaction with CENPE, promoting pole-proximal transport of chromosomes toward the equator. Detyrosination increases microtubules-dependent mechanotransduction in dystrophic cardiac and skeletal muscle. In cardiomyocytes, detyrosinated microtubules are required to resist to contractile compression during contraction: detyrosination promotes association with desmin (DES) at force-generating sarcomeres, leading to buckled microtubules and mechanical resistance to contraction.

The protein resides in the cytoplasm. Its subcellular location is the cytoskeleton. It carries out the reaction GTP + H2O = GDP + phosphate + H(+). In terms of biological role, tubulin is the major constituent of microtubules, a cylinder consisting of laterally associated linear protofilaments composed of alpha- and beta-tubulin heterodimers. Microtubules grow by the addition of GTP-tubulin dimers to the microtubule end, where a stabilizing cap forms. Below the cap, tubulin dimers are in GDP-bound state, owing to GTPase activity of alpha-tubulin. The protein is Tubulin alpha-1D chain (TUBA1D) of Bos taurus (Bovine).